The primary structure comprises 1688 residues: Voltage-dependent L-type calcium channel subunit alpha-1S (1688 aa).

Residues 1 to 24 (MDAMGSAAEEGTQKKKRRPLVPPP) are disordered. Over 1–51 (MDAMGSAAEEGTQKKKRRPLVPPPPRPPRALFCLGLQNPFRKFCINIVEWK) the chain is Cytoplasmic. The I repeat unit spans residues 38-335 (NPFRKFCINI…LVLGVLSGEF (298 aa)). A helical transmembrane segment spans residues 52 to 70 (PFEMIILLTIFANCVALAI). Topologically, residues 71–88 (FLPMPEDDTNSTNSVLEK) are extracellular. An N-linked (GlcNAc...) asparagine glycan is attached at Asn80. A helical membrane pass occupies residues 89–108 (VEYIFLFIFTIESFLKIVAY). The Cytoplasmic segment spans residues 109-120 (GFILHTDAYLRN). A helical membrane pass occupies residues 121–139 (GWNILDFTIVSVGVFSVLL). The Extracellular segment spans residues 140-158 (EQISKLQGLPAPGKSSGFN). Residues 159-177 (VKALRAFRVLRPLRLVSGV) traverse the membrane as a helical segment. The Cytoplasmic portion of the chain corresponds to 178–196 (PSLQVVLNSIIKAMIPLLH). A helical transmembrane segment spans residues 197-216 (IALLVLFMIIIYAIVGLELF). Residues 217–307 (SGKMHKTCYF…WVNDAIGNEW (91 aa)) lie on the Extracellular side of the membrane. N-linked (GlcNAc...) asparagine glycosylation is present at Asn255. Ca(2+) is bound at residue Glu290. Residues 308–332 (PWIYFVSLILLGSFFVLNLVLGVLS) form a helical membrane-spanning segment. Residues 333 to 431 (GEFTKEREKA…RKSRDLVKSR (99 aa)) are Cytoplasmic-facing. Residues 355-372 (QAMDEDLRGYLDWITHAE) are binding to the beta subunit. One copy of the II repeat lies at 417-663 (HRLLRRKSRD…VFLAIAVDNL (247 aa)). The chain crosses the membrane as a helical span at residues 432-450 (FFYWLVIIIILLNTVIIAT). At 451–465 (EHHHQPDSLTKAQDI) the chain is on the extracellular side. The helical transmembrane segment at 466–485 (ANEVLLALFTMEMIVKIYAL) threads the bilayer. The Cytoplasmic segment spans residues 486-493 (GFQSYFMS). The helical transmembrane segment at 494 to 512 (LFNRFDSFVVCTGLLEVML) threads the bilayer. At 513-522 (VASDIMSPLG) the chain is on the extracellular side. Residues 523–541 (ISVLRCIRLLRIFKITRYW) form a helical membrane-spanning segment. Residues 542 to 560 (TSLNNLVASLLNSVRSIAS) lie on the Cytoplasmic side of the membrane. A helical transmembrane segment spans residues 561–580 (LLLLLFLFMIIFALLGMQMF). Over 581–635 (GGKFDFEDLEVRRSTFDTFPQALITVFQILTGEDWTAVMYNGIMAYGGPTYSGMS) the chain is Extracellular. Ca(2+) is bound at residue Glu613. The helical transmembrane segment at 636 to 660 (VCIYFIILFVCGNYILLNVFLAIAV) threads the bilayer. The Cytoplasmic segment spans residues 661–797 (DNLAEAENLT…VLCHRIINAT (137 aa)). Disordered regions lie at residues 672–696 (AQKA…TEEE) and 729–755 (EIKD…ISPR). A compositionally biased stretch (acidic residues) spans 740–749 (PGDDEEEEPE). The III repeat unit spans residues 784–1066 (NKIRVLCHRI…IFVGFVIVTF (283 aa)). Residues 798 to 816 (TFTNFILLFILLSSISLAA) traverse the membrane as a helical segment. Over 817-832 (EDPIQPESFRNKVLSK) the chain is Extracellular. A helical transmembrane segment spans residues 833–852 (LDIVFTVIFTTEIVLKMTAY). Residues 853–864 (GAFLHKGSFCRN) are Cytoplasmic-facing. The helical transmembrane segment at 865–883 (SFNILDLSVVGVSLISMGI) threads the bilayer. Residues 884–890 (ESSAISV) are Extracellular-facing. A helical transmembrane segment spans residues 891-909 (VKILRVLRVLRPLRAINRA). Topologically, residues 910–928 (KGLKHVVQCLFVAIKTIGN) are cytoplasmic. The chain crosses the membrane as a helical span at residues 929–948 (IVLVTTLLQFMFSCIGVQLF). The Extracellular portion of the chain corresponds to 949–1038 (KGKFYSCTDT…MGPIYNYRIE (90 aa)). Residues 986-1075 (RVWSHSDFHF…FQEQGEQEYK (90 aa)) form a dihydropyridine binding region. Glu1012 contacts Ca(2+). Residues 1039 to 1063 (IAVFFIVYIILIAFFMMNIFVGFVI) traverse the membrane as a helical segment. At 1064-1116 (VTFQEQGEQEYKDCELDKNQRQCVQYALKARPLRRYIPKNPHQYKIWYVVTSS) the chain is on the cytoplasmic side. An IV repeat occupies 1103-1371 (NPHQYKIWYV…LFVAVIMDNF (269 aa)). The chain crosses the membrane as a helical span at residues 1117 to 1135 (YFEYLMFFLITLNTISLGM). The Extracellular segment spans residues 1136 to 1150 (QHYGQTAEFSYMSDI). The helical transmembrane segment at 1151-1170 (LNVAFTGIFTVEMFLKLAAF) threads the bilayer. The Cytoplasmic segment spans residues 1171–1178 (KAKGYFGD). Residues 1179–1197 (PWNVFDFLIVIGSVIDVIL) form a helical membrane-spanning segment. The Extracellular portion of the chain corresponds to 1198–1218 (SEIDTPGIPATPGAEESSRIS). The chain crosses the membrane as a helical span at residues 1219-1237 (ITFFRLFRVLRLVKLLSRG). The Cytoplasmic segment spans residues 1238–1256 (EGVRTLLWTFIKSFQALPY). The chain crosses the membrane as a helical span at residues 1257-1276 (VALLIVMLFFIYAVIGMQVF). Residues 1277 to 1343 (GKIALVDGTH…GEEYTCGTSF (67 aa)) are Extracellular-facing. The tract at residues 1324–1390 (LCDPMSDFQP…LGPHHLDEFK (67 aa)) is dihydropyridine binding. Residues 1336–1379 (EYTCGTSFAYFYFISFYMLCAFLIINLFVAVIMDNFDYLTRDWS) form a phenylalkylamine binding region. Residues 1344–1368 (AYFYFISFYMLCAFLIINLFVAVIM) traverse the membrane as a helical segment. Topologically, residues 1369–1688 (DNFDYLTRDW…TNSSISQATN (320 aa)) are cytoplasmic. Disordered regions lie at residues 1635–1664 (PEPV…RLTT) and 1669–1688 (RVQQ…QATN). The span at 1678 to 1688 (DTNSSISQATN) shows a compositional bias: polar residues.

This sequence belongs to the calcium channel alpha-1 subunit (TC 1.A.1.11) family. Multisubunit complex consisting of alpha-1, alpha-2, beta and delta subunits in a 1:1:1:1 ratio. The channel activity is directed by the pore-forming and voltage-sensitive alpha-1 subunit. In many cases, this subunit is sufficient to generate voltage-sensitive calcium channel activity. The auxiliary subunits beta and alpha-2/delta linked by a disulfide bridge regulate the channel activity. An additional gamma subunit is present only in skeletal muscle L-type channel. In terms of processing, phosphorylation by PKA stimulates the calcium channel function. Skeletal muscle specific.

The protein resides in the membrane. Functionally, voltage-sensitive calcium channels (VSCC) mediate the entry of calcium ions into excitable cells and are also involved in a variety of calcium-dependent processes, including muscle contraction, gene expression, cell motility, cell division and cell death. The isoform alpha-1S gives rise to L-type calcium currents. Long-lasting (L-type) calcium channels belong to the 'high-voltage activated' (HVA) group. They are blocked by dihydropyridines (DHP), phenylalkylamines, and by benzothiazepines. Calcium channels containing the alpha-1S subunit play an important role in excitation-contraction coupling in skele|tal muscle. The protein is Voltage-dependent L-type calcium channel subunit alpha-1S of Aquarana catesbeiana (American bullfrog).